The primary structure comprises 405 residues: Putative phosphate permease PYRAB14010 (405 aa).

The next 11 membrane-spanning stretches (helical) occupy residues 3–23 (MDPWLLLTLILGLAMAWAIGA), 44–64 (AVLIAGILEFTGAYFFGKTVT), 82–102 (VLVYGSLAALLGATIWLVIAT), 114–134 (IIGGIVGYGVVYAGLEIVNWG), 138–158 (SVVLSWILSPIVGAIFAFFIF), 181–201 (VWIGLAFVVIGTMFYIKVLHG), 207–227 (GVLKLGIPVGLVVFLITSMIL), 264–284 (VANAIGPVAAVYTIATMGMAG), 287–307 (VPVPRWILALGGLGIAIGVAT), 329–349 (FTIDFSAATVVLIASWLGMPI), and 384–404 (FVTVPVAGLISAIIFKILWIV).

It belongs to the inorganic phosphate transporter (PiT) (TC 2.A.20) family.

It is found in the cell membrane. In terms of biological role, potential transporter for phosphate. The protein is Putative phosphate permease PYRAB14010 of Pyrococcus abyssi (strain GE5 / Orsay).